Reading from the N-terminus, the 412-residue chain is [Pyruvate dehydrogenase (acetyl-transferring)] kinase isozyme 4, mitochondrial (412 aa).

Residues 138-368 (IIEYKDSCTV…DAIIYLKALS (231 aa)) enclose the Histidine kinase domain. ATP is bound by residues 254 to 261 (ELFKNAMR), Asp293, 312 to 313 (ST), and 329 to 334 (GFGYGL).

This sequence belongs to the PDK/BCKDK protein kinase family. Homodimer. Interacts with the pyruvate dehydrogenase complex subunit DLAT, and is part of the multimeric pyruvate dehydrogenase complex that contains multiple copies of pyruvate dehydrogenase (E1), dihydrolipoamide acetyltransferase (DLAT, E2) and lipoamide dehydrogenase (DLD, E3). Detected in heart, white adipose tissue and muscle.

It localises to the mitochondrion matrix. It catalyses the reaction L-seryl-[pyruvate dehydrogenase E1 alpha subunit] + ATP = O-phospho-L-seryl-[pyruvate dehydrogenase E1 alpha subunit] + ADP + H(+). Functionally, kinase that plays a key role in regulation of glucose and fatty acid metabolism and homeostasis via phosphorylation of the pyruvate dehydrogenase subunits PDHA1 and PDHA2. This inhibits pyruvate dehydrogenase activity, and thereby regulates metabolite flux through the tricarboxylic acid cycle, down-regulates aerobic respiration and inhibits the formation of acetyl-coenzyme A from pyruvate. Inhibition of pyruvate dehydrogenase decreases glucose utilization and increases fat metabolism in response to prolonged fasting and starvation. Plays an important role in maintaining normal blood glucose levels under starvation, and is involved in the insulin signaling cascade. Via its regulation of pyruvate dehydrogenase activity, plays an important role in maintaining normal blood pH and in preventing the accumulation of ketone bodies under starvation. In the fed state, mediates cellular responses to glucose levels and to a high-fat diet. Regulates both fatty acid oxidation and de novo fatty acid biosynthesis. Plays a role in the generation of reactive oxygen species. Protects detached epithelial cells against anoikis. Plays a role in cell proliferation via its role in regulating carbohydrate and fatty acid metabolism. The chain is [Pyruvate dehydrogenase (acetyl-transferring)] kinase isozyme 4, mitochondrial (PDK4) from Rhinolophus ferrumequinum (Greater horseshoe bat).